The following is a 681-amino-acid chain: Threonine--tRNA ligase (681 aa).

Positions 3–97 constitute a TGS domain; that stretch reads KQIQVTLPDG…EEDVQLALLT (95 aa). The tract at residues 279 to 576 is catalytic; sequence DHRVLGKQLD…LIEHYAGAFP (298 aa). Residues Cys372, His423, and His553 each contribute to the Zn(2+) site.

Belongs to the class-II aminoacyl-tRNA synthetase family. As to quaternary structure, homodimer. The cofactor is Zn(2+).

It is found in the cytoplasm. It carries out the reaction tRNA(Thr) + L-threonine + ATP = L-threonyl-tRNA(Thr) + AMP + diphosphate + H(+). Its function is as follows. Catalyzes the attachment of threonine to tRNA(Thr) in a two-step reaction: L-threonine is first activated by ATP to form Thr-AMP and then transferred to the acceptor end of tRNA(Thr). Also edits incorrectly charged L-seryl-tRNA(Thr). The polypeptide is Threonine--tRNA ligase (Acidobacterium capsulatum (strain ATCC 51196 / DSM 11244 / BCRC 80197 / JCM 7670 / NBRC 15755 / NCIMB 13165 / 161)).